The chain runs to 249 residues: MHSIPADTGHTPSRAPAGNGSPPADVAFPKAIKSYVRRAGRTTTGQAKALETFGSQFVLDYTPGPLDAQAAFGRAAPLILEIGFGMGEATAHIAGVRPQDDFLCCEVHEPGVGALLKRIGERGLTNIRILQHDAVEVIDHMLPEGSLDGVHIFFPDPWHKKRHNKRRLVQPPLVAKLARRLKPGGYLHCATDWQPYAEQMLEVLSAEPLLANSADGYAPQPDYRPLTKFENRGLRLGHGVWDILFRRVA.

The segment at 1–24 is disordered; that stretch reads MHSIPADTGHTPSRAPAGNGSPPA. S-adenosyl-L-methionine contacts are provided by glutamate 81, glutamate 106, aspartate 133, and aspartate 156. The active site involves aspartate 156. Residue lysine 160 participates in substrate binding. Residues 162 to 167 are interaction with RNA; that stretch reads RHNKRR. Residues aspartate 192 and 227–230 contribute to the substrate site; that span reads TKFE.

This sequence belongs to the class I-like SAM-binding methyltransferase superfamily. TrmB family.

It carries out the reaction guanosine(46) in tRNA + S-adenosyl-L-methionine = N(7)-methylguanosine(46) in tRNA + S-adenosyl-L-homocysteine. Its pathway is tRNA modification; N(7)-methylguanine-tRNA biosynthesis. Its function is as follows. Catalyzes the formation of N(7)-methylguanine at position 46 (m7G46) in tRNA. The sequence is that of tRNA (guanine-N(7)-)-methyltransferase from Paracidovorax citrulli (strain AAC00-1) (Acidovorax citrulli).